A 159-amino-acid polypeptide reads, in one-letter code: Lipoprotein signal peptidase (159 aa).

The next 2 membrane-spanning stretches (helical) occupy residues 59–79 and 87–107; these read PMILIVSTTLILAALFLYVVF and FLITFGLILGGGIGNGIDRIL. Active-site residues include aspartate 113 and aspartate 139. A helical membrane pass occupies residues 131-151; that stretch reads LWPVFNIADSAITIGACVLVI.

Belongs to the peptidase A8 family.

Its subcellular location is the cell inner membrane. The enzyme catalyses Release of signal peptides from bacterial membrane prolipoproteins. Hydrolyzes -Xaa-Yaa-Zaa-|-(S,diacylglyceryl)Cys-, in which Xaa is hydrophobic (preferably Leu), and Yaa (Ala or Ser) and Zaa (Gly or Ala) have small, neutral side chains.. It participates in protein modification; lipoprotein biosynthesis (signal peptide cleavage). In terms of biological role, this protein specifically catalyzes the removal of signal peptides from prolipoproteins. The protein is Lipoprotein signal peptidase of Chlorobium phaeobacteroides (strain BS1).